Reading from the N-terminus, the 233-residue chain is Cilia- and flagella-associated protein 299 (233 aa).

As to expression, abundantly expressed in testis, specifically in spermatogonia and primary spermatocytes but not in secondary spermatocytes and spermatids.

It localises to the cytoplasm. The protein localises to the nucleus. In terms of biological role, may be involved in spermatogenesis. This is Cilia- and flagella-associated protein 299 from Mus musculus (Mouse).